Reading from the N-terminus, the 586-residue chain is Pectinesterase 1 (586 aa).

The first 49 residues, 1 to 49, serve as a signal peptide directing secretion; sequence MDSVNSFKGYGKVDEAQDLALKKKTRKRLLLLSISVVVLIAVIIAAVVA. Asn57, Asn97, Asn154, Asn201, and Asn207 each carry an N-linked (GlcNAc...) asparagine glycan. The RRLM cleavage motif signature appears at 250–253; the sequence is RRLM. An RRLL cleavage motif motif is present at residues 269–272; that stretch reads RRLL. 2 residues coordinate substrate: Thr355 and Gln385. Residue Asp408 is the Proton donor of the active site. An intrachain disulfide couples Cys422 to Cys442. Asp429 serves as the catalytic Nucleophile. A glycan (N-linked (GlcNAc...) asparagine) is linked at Asn466. Residues Arg492 and Trp494 each coordinate substrate.

In the N-terminal section; belongs to the PMEI family. It in the C-terminal section; belongs to the pectinesterase family. Interacts with SBT6.1. In terms of tissue distribution, expressed in siliques.

It localises to the secreted. The protein localises to the cell wall. Its subcellular location is the golgi apparatus membrane. The catalysed reaction is [(1-&gt;4)-alpha-D-galacturonosyl methyl ester](n) + n H2O = [(1-&gt;4)-alpha-D-galacturonosyl](n) + n methanol + n H(+). It participates in glycan metabolism; pectin degradation; 2-dehydro-3-deoxy-D-gluconate from pectin: step 1/5. Acts in the modification of cell walls via demethylesterification of cell wall pectin. Demethylates protein phosphatase 2A (PP2A) that have been reversibly carboxymethylated by LCMT1. Acts as a negative regulators of genes involved in salt stress response. The chain is Pectinesterase 1 (PME1) from Arabidopsis thaliana (Mouse-ear cress).